Reading from the N-terminus, the 260-residue chain is Thiamine thiazole synthase (260 aa).

Residues Ala36, 55 to 56 (EQ), Gly63, and 154 to 156 (HVD) each bind NAD(+). 2 residues coordinate Fe cation: Asp156 and His171. Met224 lines the NAD(+) pocket. Position 234 (Arg234) interacts with glycine.

This sequence belongs to the THI4 family. Homooctamer; tetramer of dimers. Fe(2+) is required as a cofactor.

The enzyme catalyses hydrogen sulfide + glycine + NAD(+) = ADP-5-ethyl-4-methylthiazole-2-carboxylate + nicotinamide + 3 H2O + H(+). It functions in the pathway cofactor biosynthesis; thiamine diphosphate biosynthesis. Its function is as follows. Involved in the biosynthesis of the thiazole moiety of thiamine. Catalyzes the conversion of NAD and glycine to adenosine diphosphate 5-(2-hydroxyethyl)-4-methylthiazole-2-carboxylate (ADT), an adenylated thiazole intermediate, using free sulfide as a source of sulfur. In Methanosarcina barkeri (strain Fusaro / DSM 804), this protein is Thiamine thiazole synthase.